Reading from the N-terminus, the 81-residue chain is EC protein I/II (81 aa).

This sequence belongs to the metallothionein superfamily. Type 15 family.

Functionally, binds 5 molecules of zinc. May have a role in Zn(2+) homeostasis during embryogenesis. The chain is EC protein I/II from Triticum aestivum (Wheat).